The sequence spans 199 residues: uncharacterized protein (199 aa).

7 consecutive transmembrane segments (helical) span residues 10 to 32, 37 to 59, 63 to 80, 83 to 100, 104 to 121, 126 to 148, and 163 to 185; these read LTSQ…FIGY, VYSA…INYY, LIVI…FALI, LGLI…GVYL, YQVY…INLF, LTVL…MGIT, and FDAI…TGII.

Its subcellular location is the cell membrane. This is an uncharacterized protein from Archaeoglobus fulgidus (strain ATCC 49558 / DSM 4304 / JCM 9628 / NBRC 100126 / VC-16).